The chain runs to 472 residues: Ribulose bisphosphate carboxylase large chain 1 (472 aa).

Residues Asn115 and Thr165 each contribute to the substrate site. Lys167 (proton acceptor) is an active-site residue. Lys169 serves as a coordination point for substrate. Mg(2+) contacts are provided by Lys193, Asp195, and Glu196. At Lys193 the chain carries N6-carboxylysine. His286 acts as the Proton acceptor in catalysis. Residues Arg287, His319, and Ser371 each contribute to the substrate site.

This sequence belongs to the RuBisCO large chain family. Type I subfamily. In terms of assembly, heterohexadecamer of 8 large chains and 8 small chains. Mg(2+) serves as cofactor.

The enzyme catalyses 2 (2R)-3-phosphoglycerate + 2 H(+) = D-ribulose 1,5-bisphosphate + CO2 + H2O. It carries out the reaction D-ribulose 1,5-bisphosphate + O2 = 2-phosphoglycolate + (2R)-3-phosphoglycerate + 2 H(+). In terms of biological role, ruBisCO catalyzes two reactions: the carboxylation of D-ribulose 1,5-bisphosphate, the primary event in carbon dioxide fixation, as well as the oxidative fragmentation of the pentose substrate. Both reactions occur simultaneously and in competition at the same active site. The chain is Ribulose bisphosphate carboxylase large chain 1 from Allochromatium vinosum (strain ATCC 17899 / DSM 180 / NBRC 103801 / NCIMB 10441 / D) (Chromatium vinosum).